A 102-amino-acid chain; its full sequence is Putative septation protein SpoVG 1 (102 aa).

Belongs to the SpoVG family.

Could be involved in septation. The chain is Putative septation protein SpoVG 1 from Listeria monocytogenes serotype 4b (strain F2365).